We begin with the raw amino-acid sequence, 205 residues long: Putative 3-methyladenine DNA glycosylase (205 aa).

The protein belongs to the DNA glycosylase MPG family.

The protein is Putative 3-methyladenine DNA glycosylase of Bacillus thuringiensis (strain Al Hakam).